The following is a 559-amino-acid chain: Small ribosomal subunit protein bS1 (559 aa).

6 consecutive S1 motif domains span residues 21-87 (GSII…LSRE), 105-171 (SETV…VSRR), 192-260 (GIEI…LGLK), 277-347 (GIKL…LGLK), 364-434 (GIHV…LGIK), and 451-520 (GAII…LTFH).

Belongs to the bacterial ribosomal protein bS1 family.

In terms of biological role, binds mRNA; thus facilitating recognition of the initiation point. It is needed to translate mRNA with a short Shine-Dalgarno (SD) purine-rich sequence. The protein is Small ribosomal subunit protein bS1 (rpsA) of Buchnera aphidicola subsp. Schizaphis graminum (strain Sg).